We begin with the raw amino-acid sequence, 659 residues long: Forkhead box protein P1-B (659 aa).

Composition is skewed to polar residues over residues 1–16 (MMQE…TAHQ) and 32–41 (KSTTPSSDIT). 2 disordered regions span residues 1-41 (MMQE…SDIT) and 229-263 (ENSV…NGQY). The C2H2-type zinc finger occupies 289–314 (GVCKWPGCEAVFEDFQSFLKHLNNEH). Positions 331–352 (VQQLELQLAKDKERLQAMMTHL) are leucine-zipper. A CTBP1-binding region spans residues 365-369 (PLNLV). Positions 379–413 (PAASPPLSLPQTPTTPTAPLTPLSQTHSVITPTSL) are disordered. Residues 387-404 (LPQTPTTPTAPLTPLSQT) show a composition bias toward low complexity. Positions 448-538 (RPPFTYASLI…PQKISGSPAL (91 aa)) form a DNA-binding region, fork-head. Residues 590 to 659 (GAMDHGNSNG…EDDHGTEDML (70 aa)) are disordered. Residues 595-605 (GNSNGSDSSPG) show a composition bias toward polar residues. The segment covering 641-659 (PDFDHHRDYEDDHGTEDML) has biased composition (basic and acidic residues).

In terms of tissue distribution, shows complex and dynamic expression during early embryonic development. Prominent in many regions of the developing central nervous system, particularly in midbrain-hindbrain boundary, hindbrain and spinal cord. Strongly expressed in the retina, ear, branchial arches, hatching gland, heart, pronephric duct, gut, proctodeum, pectoral fin and swim bladder.

The protein localises to the nucleus. In terms of biological role, transcriptional repressor. This chain is Forkhead box protein P1-B (foxp1b), found in Danio rerio (Zebrafish).